The chain runs to 161 residues: Nucleotide-binding protein NE2248 (161 aa).

The protein belongs to the YajQ family.

In terms of biological role, nucleotide-binding protein. The polypeptide is Nucleotide-binding protein NE2248 (Nitrosomonas europaea (strain ATCC 19718 / CIP 103999 / KCTC 2705 / NBRC 14298)).